The chain runs to 749 residues: Protein Niban 2 (749 aa).

The N-myristoyl glycine moiety is linked to residue G2. The PH domain occupies 68–192 (RIIFSGNLFQ…WQAVLQDCVR (125 aa)). A phosphoserine mark is found at S568, S574, S607, S628, S647, S650, S669, S674, S685, S695, and S699. Positions 589 to 749 (WGEQYGDSGD…EDSAGVQTEF (161 aa)) are disordered. Basic and acidic residues predominate over residues 710–719 (VDLEPPKPSD). The span at 723-749 (GEQVSSPGSRPPIHTTTEDSAGVQTEF) shows a compositional bias: polar residues.

It belongs to the Niban family. Post-translationally, as apoptosis proceeds, degraded via an proteasome-independent pathway, probably by caspases.

The protein localises to the cytoplasm. It localises to the cytosol. The protein resides in the cell junction. It is found in the adherens junction. Its subcellular location is the membrane. May play a role in apoptosis suppression. The protein is Protein Niban 2 of Mus musculus (Mouse).